A 295-amino-acid chain; its full sequence is 4-hydroxy-tetrahydrodipicolinate synthase (295 aa).

Residue threonine 47 coordinates pyruvate. Tyrosine 135 serves as the catalytic Proton donor/acceptor. Lysine 163 serves as the catalytic Schiff-base intermediate with substrate. Residue isoleucine 204 participates in pyruvate binding.

It belongs to the DapA family. As to quaternary structure, homotetramer; dimer of dimers.

Its subcellular location is the cytoplasm. The catalysed reaction is L-aspartate 4-semialdehyde + pyruvate = (2S,4S)-4-hydroxy-2,3,4,5-tetrahydrodipicolinate + H2O + H(+). Its pathway is amino-acid biosynthesis; L-lysine biosynthesis via DAP pathway; (S)-tetrahydrodipicolinate from L-aspartate: step 3/4. Catalyzes the condensation of (S)-aspartate-beta-semialdehyde [(S)-ASA] and pyruvate to 4-hydroxy-tetrahydrodipicolinate (HTPA). This chain is 4-hydroxy-tetrahydrodipicolinate synthase, found in Caldicellulosiruptor saccharolyticus (strain ATCC 43494 / DSM 8903 / Tp8T 6331).